The sequence spans 216 residues: 3-keto-L-gulonate-6-phosphate decarboxylase UlaD (216 aa).

Substrate is bound at residue aspartate 11. Mg(2+) is bound by residues glutamate 33 and aspartate 62. Arginine 192 is a binding site for substrate.

It belongs to the HPS/KGPDC family. KGPDC subfamily. In terms of assembly, homodimer. Mg(2+) serves as cofactor.

It catalyses the reaction 3-dehydro-L-gulonate 6-phosphate + H(+) = L-xylulose 5-phosphate + CO2. The protein operates within cofactor degradation; L-ascorbate degradation; D-xylulose 5-phosphate from L-ascorbate: step 2/4. Functionally, catalyzes the decarboxylation of 3-keto-L-gulonate-6-P into L-xylulose-5-P. Is involved in the anaerobic L-ascorbate utilization. The chain is 3-keto-L-gulonate-6-phosphate decarboxylase UlaD from Escherichia fergusonii (strain ATCC 35469 / DSM 13698 / CCUG 18766 / IAM 14443 / JCM 21226 / LMG 7866 / NBRC 102419 / NCTC 12128 / CDC 0568-73).